The primary structure comprises 157 residues: Tuberoinfundibular peptide of 39 residues (157 aa).

The first 25 residues, 1–25, serve as a signal peptide directing secretion; the sequence is MALSLPPRPALLFLVLMSVTLMASA. The propeptide occupies 26 to 116; sequence FPQPQLRPLQ…DWPSRVGHQQ (91 aa).

It belongs to the parathyroid hormone family.

It localises to the secreted. In terms of biological role, plays a role as a potent and selective agonist of pth2r resulting in adenyl cyclase activation and intracellular calcium level elevation. This Danio rerio (Zebrafish) protein is Tuberoinfundibular peptide of 39 residues.